The chain runs to 870 residues: Leucine--tRNA ligase (870 aa).

The short motif at P42–H52 is the 'HIGH' region element. Residues K629–S633 carry the 'KMSKS' region motif. K632 provides a ligand contact to ATP.

The protein belongs to the class-I aminoacyl-tRNA synthetase family.

It is found in the cytoplasm. It carries out the reaction tRNA(Leu) + L-leucine + ATP = L-leucyl-tRNA(Leu) + AMP + diphosphate. This Azotobacter vinelandii (strain DJ / ATCC BAA-1303) protein is Leucine--tRNA ligase.